A 446-amino-acid chain; its full sequence is Xanthone prenyltransferase A (446 aa).

8 residues coordinate dimethylallyl diphosphate: Arg-113, Lys-199, Tyr-201, Arg-263, Lys-265, Tyr-267, Tyr-369, and Tyr-440.

The protein belongs to the tryptophan dimethylallyltransferase family.

It participates in secondary metabolite biosynthesis. Xanthone prenyltransferase involved in the conversion of monodictyphenone to the prenyl xanthones such as emericellin, shamixanthone and epishamixanthone. Monodictyphenone is first converted to variecoxanthone A via a paeciloxanthone intermediate by the consecutive actions of the FAD-dependent monooxygenase mdpD and the xanthone prenyltransferase xptB. XptB catalyzes regular O-prenylation at the hydroxy group of C-7 of the xanthone ring. Variecoxanthone A is further prenylated to emericellin by xptA before being reduced to shamixanthone and epishamixanthone by the dehydrogenase xptC. The sequence is that of Xanthone prenyltransferase A from Emericella nidulans (strain FGSC A4 / ATCC 38163 / CBS 112.46 / NRRL 194 / M139) (Aspergillus nidulans).